The primary structure comprises 128 residues: RxLR effector protein SFI2 (128 aa).

The first 22 residues, 1-22, serve as a signal peptide directing secretion; the sequence is MRSAFYIFLVVAVLARCSVVAA. The RxLR-dEER motif lies at 52 to 71; it reads RLLRVAGREDDDATTDEEDR.

This sequence belongs to the RxLR effector family.

The protein localises to the secreted. The protein resides in the host nucleus. Functionally, effector that suppresses flg22-induced post-translational MAP kinase activation both tomato and Arabidopsis. The perception of highly conserved pathogen- or microbe-associated molecular patterns (PAMPs/MAMPs), such as flg22, triggers converging signaling pathways recruiting MAP kinase cascades and inducing transcriptional re-programming, yielding a generic antimicrobial response. This Phytophthora infestans (strain T30-4) (Potato late blight agent) protein is RxLR effector protein SFI2.